The sequence spans 426 residues: Histidine--tRNA ligase (426 aa).

Belongs to the class-II aminoacyl-tRNA synthetase family. As to quaternary structure, homodimer.

Its subcellular location is the cytoplasm. The enzyme catalyses tRNA(His) + L-histidine + ATP = L-histidyl-tRNA(His) + AMP + diphosphate + H(+). This is Histidine--tRNA ligase from Prochlorococcus marinus (strain AS9601).